The sequence spans 341 residues: Methionine import ATP-binding protein MetN 1 (341 aa).

An ABC transporter domain is found at 2–241; the sequence is IEFRQVSKSF…PKTTIAQNFV (240 aa). 38 to 45 provides a ligand contact to ATP; it reads GYSGAGKS.

It belongs to the ABC transporter superfamily. Methionine importer (TC 3.A.1.24) family. In terms of assembly, the complex is composed of two ATP-binding proteins (MetN), two transmembrane proteins (MetI) and a solute-binding protein (MetQ).

It localises to the cell membrane. It carries out the reaction L-methionine(out) + ATP + H2O = L-methionine(in) + ADP + phosphate + H(+). The enzyme catalyses D-methionine(out) + ATP + H2O = D-methionine(in) + ADP + phosphate + H(+). Functionally, part of the ABC transporter complex MetNIQ involved in methionine import. Responsible for energy coupling to the transport system. The protein is Methionine import ATP-binding protein MetN 1 of Staphylococcus aureus (strain Mu50 / ATCC 700699).